Here is a 309-residue protein sequence, read N- to C-terminus: Ribonuclease Z (309 aa).

Zn(2+) contacts are provided by His-64, His-66, Asp-68, His-69, His-141, Asp-209, and His-267. Catalysis depends on Asp-68, which acts as the Proton acceptor.

This sequence belongs to the RNase Z family. Homodimer. Zn(2+) serves as cofactor.

It carries out the reaction Endonucleolytic cleavage of RNA, removing extra 3' nucleotides from tRNA precursor, generating 3' termini of tRNAs. A 3'-hydroxy group is left at the tRNA terminus and a 5'-phosphoryl group is left at the trailer molecule.. Its function is as follows. Zinc phosphodiesterase, which displays some tRNA 3'-processing endonuclease activity. Probably involved in tRNA maturation, by removing a 3'-trailer from precursor tRNA. This is Ribonuclease Z from Picrophilus torridus (strain ATCC 700027 / DSM 9790 / JCM 10055 / NBRC 100828 / KAW 2/3).